The sequence spans 348 residues: Killer cell immunoglobulin-like receptor 2DL1 (348 aa).

The signal sequence occupies residues 1-21 (MSLLVVSMACVGFFLLQGAWP). Residues 22–245 (HEGVHRKPSL…SKTGNPRHLH (224 aa)) lie on the Extracellular side of the membrane. Ig-like C2-type domains lie at 42-107 (EETV…VTHS) and 142-205 (GENV…FHDS). Cysteines 49 and 100 form a disulfide. 4 N-linked (GlcNAc...) asparagine glycosylation sites follow: N67, N84, N144, and N178. An intrachain disulfide couples C149 to C198. The segment at 220–239 (VTGNPSNSWPSPTEPSSKTG) is disordered. Residues 246–264 (ILIGTSVVIILFILLFFLL) form a helical membrane-spanning segment. Residues 265 to 348 (HRWCSNKKNA…ESRSKVVSCP (84 aa)) lie on the Cytoplasmic side of the membrane.

Belongs to the immunoglobulin superfamily. Interacts with ARRB2. Interacts with PTPN6; the interaction is enhanced by ARRB2. Interacts with PTPN11; the interaction is enhanced by ARRB2. As to expression, expressed by NK cells.

It localises to the cell membrane. Receptor on natural killer (NK) cells for some HLA-C alleles such as w4 and w6. Inhibits the activity of NK cells thus preventing cell lysis. In Homo sapiens (Human), this protein is Killer cell immunoglobulin-like receptor 2DL1.